A 660-amino-acid chain; its full sequence is ATPase WRNIP1 (660 aa).

A UBZ4-type zinc finger spans residues Gln-17–Pro-44. Zn(2+) is bound by residues Cys-20, Cys-23, His-31, His-35, and Cys-39. The interval Ala-48 to Ala-191 is disordered. Ser-65 and Ser-75 each carry phosphoserine. A compositionally biased stretch (polar residues) spans Glu-76–Ala-89. Residue Lys-81 forms a Glycyl lysine isopeptide (Lys-Gly) (interchain with G-Cter in ubiquitin) linkage. At Thr-85 the chain carries Phosphothreonine. 2 positions are modified to phosphoserine: Ser-91 and Ser-92. A compositionally biased stretch (acidic residues) spans Ser-92–Glu-104. The residue at position 116 (Thr-116) is a Phosphothreonine. The segment covering Ala-135–Arg-155 has biased composition (low complexity). A Glycyl lysine isopeptide (Lys-Gly) (interchain with G-Cter in ubiquitin) cross-link involves residue Lys-141. Ser-153 is modified (phosphoserine). A compositionally biased stretch (acidic residues) spans Glu-159 to Asp-182. Lys-220 is covalently cross-linked (Glycyl lysine isopeptide (Lys-Gly) (interchain with G-Cter in ubiquitin)). Pro-265–Thr-271 lines the ATP pocket. Glycyl lysine isopeptide (Lys-Gly) (interchain with G-Cter in ubiquitin) cross-links involve residues Lys-296, Lys-305, Lys-311, Lys-317, and Lys-330. Lys-477 participates in a covalent cross-link: Glycyl lysine isopeptide (Lys-Gly) (interchain with G-Cter in SUMO2); alternate. Lys-477 is covalently cross-linked (Glycyl lysine isopeptide (Lys-Gly) (interchain with G-Cter in ubiquitin); alternate). A phosphotyrosine mark is found at Tyr-529 and Tyr-557. Lys-622 participates in a covalent cross-link: Glycyl lysine isopeptide (Lys-Gly) (interchain with G-Cter in ubiquitin). A Glycyl lysine isopeptide (Lys-Gly) (interchain with G-Cter in ubiquitin); alternate cross-link involves residue Lys-628. N6-acetyllysine; alternate is present on Lys-628. Lys-631 participates in a covalent cross-link: Glycyl lysine isopeptide (Lys-Gly) (interchain with G-Cter in ubiquitin).

It belongs to the AAA ATPase family. RarA/MGS1/WRNIP1 subfamily. As to quaternary structure, forms homooligomers, possibly octamers. Directly interacts with POLD1, POLD2 and POLD4. Interacts with the N-terminal domain of WRN. Interacts (via UBZ4-type zinc finger) with monoubiquitin and polyubiquitin. Interacts with TRIM14 and PPP6C; these interactions positively regulate the RIGI signaling pathway. Post-translationally, sumoylated with SUMO1 and SUMO2/3. In terms of tissue distribution, ubiquitously expressed.

It localises to the nucleus. It is found in the cytoplasm. It carries out the reaction ATP + H2O = ADP + phosphate + H(+). In terms of biological role, functions as a modulator of initiation or reinitiation events during DNA polymerase delta-mediated DNA synthesis. In the presence of ATP, stimulation of DNA polymerase delta-mediated DNA synthesis is decreased. Also plays a role in the innate immune defense against viruses. Stabilizes the RIGI dsRNA interaction and promotes RIGI 'Lys-63'-linked polyubiquitination. In turn, RIGI transmits the signal through mitochondrial MAVS. In Mus musculus (Mouse), this protein is ATPase WRNIP1.